The sequence spans 96 residues: Small ribosomal subunit protein bS6 (96 aa).

The protein belongs to the bacterial ribosomal protein bS6 family.

Its function is as follows. Binds together with bS18 to 16S ribosomal RNA. The protein is Small ribosomal subunit protein bS6 of Cutibacterium acnes (strain DSM 16379 / KPA171202) (Propionibacterium acnes).